Reading from the N-terminus, the 181-residue chain is Protein Syd (181 aa).

Belongs to the Syd family.

It is found in the cell inner membrane. Its function is as follows. Interacts with the SecY protein in vivo. May bind preferentially to an uncomplexed state of SecY, thus functioning either as a chelating agent for excess SecY in the cell or as a regulatory factor that negatively controls the translocase function. This Cronobacter sakazakii (strain ATCC BAA-894) (Enterobacter sakazakii) protein is Protein Syd.